Consider the following 575-residue polypeptide: Arginine--tRNA ligase (575 aa).

The 'HIGH' region motif lies at 136 to 146 (ANPTGPLHVGH).

It belongs to the class-I aminoacyl-tRNA synthetase family. As to quaternary structure, monomer.

The protein localises to the cytoplasm. The enzyme catalyses tRNA(Arg) + L-arginine + ATP = L-arginyl-tRNA(Arg) + AMP + diphosphate. The chain is Arginine--tRNA ligase from Polynucleobacter necessarius subsp. necessarius (strain STIR1).